Consider the following 87-residue polypeptide: MANHKSAAKRARQSIRKTAVNNARKSTVKTAEKKLVKAIEAKDLKALPELLKNFSSQVMKAAKTGVIKKETASRKISRLSTRASATK.

Positions 1–15 are enriched in basic residues; sequence MANHKSAAKRARQSI. Residues 1–29 form a disordered region; it reads MANHKSAAKRARQSIRKTAVNNARKSTVK. Residues 19–29 show a composition bias toward polar residues; the sequence is AVNNARKSTVK.

It belongs to the bacterial ribosomal protein bS20 family.

Its function is as follows. Binds directly to 16S ribosomal RNA. This is Small ribosomal subunit protein bS20 from Bdellovibrio bacteriovorus (strain ATCC 15356 / DSM 50701 / NCIMB 9529 / HD100).